The sequence spans 578 residues: Protein LIKE EARLY STARVATION, chloroplastic (578 aa).

The transit peptide at 1 to 56 (MALRLGVSIGAALGSSHWDDGQRVRQRDFSASVNFTAPVTSRRSLRGSRTGVRILR) directs the protein to the chloroplast. 2 disordered regions span residues 146–166 (NNSG…TSEV) and 187–206 (SETS…TPPQ).

The protein belongs to the ESV1 family. Expressed ubiquitously.

It localises to the plastid. It is found in the chloroplast stroma. Its function is as follows. Binds preferentially to highly ordered alpha-glucans, such as starch and crystalline maltodextrins. Involved in the organization of the starch granule matrix, thus influencing starch turnover by modulating the accessibility of starch polymers to modifying and degrading enzymes involved in phosphorylation, hydrolyzes and synthesis, including starch synthases (SSI and SSIII), starch phosphorylases (PHS1), isoamylase, beta-amylase, glucan water dikinase (GWD) and phosphoglucan water dikinase (PWD). This chain is Protein LIKE EARLY STARVATION, chloroplastic, found in Arabidopsis thaliana (Mouse-ear cress).